A 189-amino-acid chain; its full sequence is Ion-translocating oxidoreductase complex subunit B (189 aa).

Positions 1-26 (MSQVIIAIILLGLLALAFGALLGYAA) are hydrophobic. Residues 32–90 (EGDPIIDQAEALLPQTQCGQCGYPGCRPYAEAIANGEKINKCPPGGTATMEKLAELMGV) enclose the 4Fe-4S domain. Cysteine 49, cysteine 52, cysteine 57, cysteine 73, cysteine 114, cysteine 117, cysteine 120, cysteine 124, cysteine 144, cysteine 147, cysteine 150, and cysteine 154 together coordinate [4Fe-4S] cluster. 2 4Fe-4S ferredoxin-type domains span residues 105 to 134 (KVAF…GTGK) and 135 to 164 (QMHT…MIPV).

This sequence belongs to the 4Fe4S bacterial-type ferredoxin family. RnfB subfamily. The complex is composed of six subunits: RnfA, RnfB, RnfC, RnfD, RnfE and RnfG. The cofactor is [4Fe-4S] cluster.

Its subcellular location is the cell inner membrane. Its function is as follows. Part of a membrane-bound complex that couples electron transfer with translocation of ions across the membrane. The sequence is that of Ion-translocating oxidoreductase complex subunit B from Shewanella loihica (strain ATCC BAA-1088 / PV-4).